The chain runs to 81 residues: Photosystem I iron-sulfur center (81 aa).

2 4Fe-4S ferredoxin-type domains span residues 1 to 31 (MSHK…MVPW) and 39 to 68 (IASS…IRVY). [4Fe-4S] cluster contacts are provided by cysteine 11, cysteine 14, cysteine 17, cysteine 21, cysteine 48, cysteine 51, cysteine 54, and cysteine 58.

As to quaternary structure, the cyanobacterial PSI reaction center is composed of one copy each of PsaA,B,C,D,E,F,I,J,K,L,M and X, and forms trimeric complexes. Requires [4Fe-4S] cluster as cofactor.

It is found in the cellular thylakoid membrane. It carries out the reaction reduced [plastocyanin] + hnu + oxidized [2Fe-2S]-[ferredoxin] = oxidized [plastocyanin] + reduced [2Fe-2S]-[ferredoxin]. Its function is as follows. Apoprotein for the two 4Fe-4S centers FA and FB of photosystem I (PSI); essential for photochemical activity. FB is the terminal electron acceptor of PSI, donating electrons to ferredoxin. The C-terminus interacts with PsaA/B/D and helps assemble the protein into the PSI complex. Required for binding of PsaD and PsaE to PSI. PSI is a plastocyanin/cytochrome c6-ferredoxin oxidoreductase, converting photonic excitation into a charge separation, which transfers an electron from the donor P700 chlorophyll pair to the spectroscopically characterized acceptors A0, A1, FX, FA and FB in turn. This Rippkaea orientalis (strain PCC 8801 / RF-1) (Cyanothece sp. (strain PCC 8801)) protein is Photosystem I iron-sulfur center.